The chain runs to 118 residues: UPF0344 protein BLi01172/BL01343 (118 aa).

Transmembrane regions (helical) follow at residues 6–26 (ITSW…YSSG), 33–53 (ITHM…AQLF), 62–82 (EYIA…MLLI), and 89–109 (AATG…VLGL).

This sequence belongs to the UPF0344 family.

It is found in the cell membrane. The polypeptide is UPF0344 protein BLi01172/BL01343 (Bacillus licheniformis (strain ATCC 14580 / DSM 13 / JCM 2505 / CCUG 7422 / NBRC 12200 / NCIMB 9375 / NCTC 10341 / NRRL NRS-1264 / Gibson 46)).